Here is a 299-residue protein sequence, read N- to C-terminus: YjeF N-terminal domain-containing protein 3 (299 aa).

In terms of domain architecture, YjeF N-terminal spans 74–287 (AAALERELLE…DVRRKFALRL (214 aa)).

In terms of assembly, interacts with APOA1. Binds to HDL. As to expression, expressed in theca cells in ovary and in Leydig cells in testis (at protein level). Also expressed in brain and mammary gland.

Functionally, may accelerate cholesterol efflux from endothelial cells to high-density lipoprotein (HDL) and thereby regulates angiogenesis. May orchestrate hematopoietic stem and progenitor cell emergence from the hemogenic endothelium, a type of specialized endothelium manifesting hematopoietic potential. YJEFN3-mediated cholesterol efflux activates endothelial SREBF2, the master transcription factor for cholesterol biosynthesis, which in turn transactivates NOTCH and promotes hematopoietic stem and progenitor cell emergence. May play a role in spermiogenesis and oogenesis. This Homo sapiens (Human) protein is YjeF N-terminal domain-containing protein 3 (YJEFN3).